Reading from the N-terminus, the 126-residue chain is Large ribosomal subunit protein eL18 (126 aa).

Belongs to the eukaryotic ribosomal protein eL18 family.

The sequence is that of Large ribosomal subunit protein eL18 from Methanosarcina mazei (strain ATCC BAA-159 / DSM 3647 / Goe1 / Go1 / JCM 11833 / OCM 88) (Methanosarcina frisia).